Here is a 500-residue protein sequence, read N- to C-terminus: NAD(P)H-quinone oxidoreductase chain 4, chloroplastic (500 aa).

The next 14 membrane-spanning stretches (helical) occupy residues 4–24 (FPWL…MLFL), 35–55 (YTIC…CYNF), 87–107 (IGTI…AFPV), 113–130 (FFHF…GSFS), 134–154 (LLLF…LLSM), 167–187 (FILY…GISL), 211–231 (ILFY…IPLH), 242–262 (HYST…YGLV), 272–292 (AHSM…IYAA), 305–325 (IAYS…SITD), 330–350 (GAIL…FLAG), 386–406 (LALP…GIIT), 416–436 (ILII…LLSM), and 462–482 (LFLS…PDFV).

Belongs to the complex I subunit 4 family.

The protein resides in the plastid. It localises to the chloroplast thylakoid membrane. The enzyme catalyses a plastoquinone + NADH + (n+1) H(+)(in) = a plastoquinol + NAD(+) + n H(+)(out). It carries out the reaction a plastoquinone + NADPH + (n+1) H(+)(in) = a plastoquinol + NADP(+) + n H(+)(out). This is NAD(P)H-quinone oxidoreductase chain 4, chloroplastic from Arabis hirsuta (Hairy rock-cress).